Here is a 292-residue protein sequence, read N- to C-terminus: Glycine--tRNA ligase alpha subunit (292 aa).

It belongs to the class-II aminoacyl-tRNA synthetase family. In terms of assembly, tetramer of two alpha and two beta subunits.

It is found in the cytoplasm. It catalyses the reaction tRNA(Gly) + glycine + ATP = glycyl-tRNA(Gly) + AMP + diphosphate. In Pelotomaculum thermopropionicum (strain DSM 13744 / JCM 10971 / SI), this protein is Glycine--tRNA ligase alpha subunit.